The following is a 156-amino-acid chain: Small ribosomal subunit protein uS7 (156 aa).

It belongs to the universal ribosomal protein uS7 family. In terms of assembly, part of the 30S ribosomal subunit. Contacts proteins S9 and S11.

In terms of biological role, one of the primary rRNA binding proteins, it binds directly to 16S rRNA where it nucleates assembly of the head domain of the 30S subunit. Is located at the subunit interface close to the decoding center, probably blocks exit of the E-site tRNA. This chain is Small ribosomal subunit protein uS7, found in Agrobacterium fabrum (strain C58 / ATCC 33970) (Agrobacterium tumefaciens (strain C58)).